Reading from the N-terminus, the 495-residue chain is Glycerol kinase (495 aa).

Position 11 (threonine 11) interacts with ADP. Threonine 11, threonine 12, and serine 13 together coordinate ATP. Threonine 11 provides a ligand contact to sn-glycerol 3-phosphate. Position 15 (arginine 15) interacts with ADP. The sn-glycerol 3-phosphate site is built by arginine 81, glutamate 82, tyrosine 133, and aspartate 242. Residues arginine 81, glutamate 82, tyrosine 133, aspartate 242, and glutamine 243 each coordinate glycerol. ADP-binding residues include threonine 264 and glycine 307. 4 residues coordinate ATP: threonine 264, glycine 307, glutamine 311, and glycine 408. ADP contacts are provided by glycine 408 and asparagine 412.

Belongs to the FGGY kinase family.

It catalyses the reaction glycerol + ATP = sn-glycerol 3-phosphate + ADP + H(+). It participates in polyol metabolism; glycerol degradation via glycerol kinase pathway; sn-glycerol 3-phosphate from glycerol: step 1/1. With respect to regulation, inhibited by fructose 1,6-bisphosphate (FBP). In terms of biological role, key enzyme in the regulation of glycerol uptake and metabolism. Catalyzes the phosphorylation of glycerol to yield sn-glycerol 3-phosphate. This chain is Glycerol kinase, found in Citrifermentans bemidjiense (strain ATCC BAA-1014 / DSM 16622 / JCM 12645 / Bem) (Geobacter bemidjiensis).